The chain runs to 151 residues: Deoxyuridine 5'-triphosphate nucleotidohydrolase (151 aa).

Residues 70-72 (RSG), asparagine 83, 87-89 (LID), and methionine 97 contribute to the substrate site.

Belongs to the dUTPase family. It depends on Mg(2+) as a cofactor.

The enzyme catalyses dUTP + H2O = dUMP + diphosphate + H(+). The protein operates within pyrimidine metabolism; dUMP biosynthesis; dUMP from dCTP (dUTP route): step 2/2. This enzyme is involved in nucleotide metabolism: it produces dUMP, the immediate precursor of thymidine nucleotides and it decreases the intracellular concentration of dUTP so that uracil cannot be incorporated into DNA. This is Deoxyuridine 5'-triphosphate nucleotidohydrolase from Pseudomonas entomophila (strain L48).